A 544-amino-acid polypeptide reads, in one-letter code: Chaperonin GroEL (544 aa).

ATP is bound by residues 30–33 (TLGP), K51, 87–91 (DGTTT), G415, 479–481 (NAA), and D495.

This sequence belongs to the chaperonin (HSP60) family. Forms a cylinder of 14 subunits composed of two heptameric rings stacked back-to-back. Interacts with the co-chaperonin GroES.

The protein resides in the cytoplasm. It carries out the reaction ATP + H2O + a folded polypeptide = ADP + phosphate + an unfolded polypeptide.. Functionally, together with its co-chaperonin GroES, plays an essential role in assisting protein folding. The GroEL-GroES system forms a nano-cage that allows encapsulation of the non-native substrate proteins and provides a physical environment optimized to promote and accelerate protein folding. This is Chaperonin GroEL from Acinetobacter baylyi (strain ATCC 33305 / BD413 / ADP1).